Reading from the N-terminus, the 137-residue chain is Small ribosomal subunit protein uS19 (137 aa).

Belongs to the universal ribosomal protein uS19 family.

Protein S19 forms a complex with S13 that binds strongly to the 16S ribosomal RNA. The protein is Small ribosomal subunit protein uS19 of Methanospirillum hungatei JF-1 (strain ATCC 27890 / DSM 864 / NBRC 100397 / JF-1).